Consider the following 465-residue polypeptide: Branched-chain amino acid permease BcaP (465 aa).

12 consecutive transmembrane segments (helical) span residues 28–48 (FLAL…PGQV), 56–76 (GVVF…LAYA), 88–110 (AYSW…ALLA), 149–169 (DGGI…IIVF), 181–201 (ILVV…ITVI), 219–239 (FGGF…YIGF), 259–279 (GIIG…LVLV), 309–329 (VVTA…VLAG), 359–379 (VWTL…AFLA), 380–400 (QLIS…IYSL), 416–436 (PFYP…FWGL), and 438–458 (VQAK…YFAY).

Belongs to the amino acid-polyamine-organocation (APC) superfamily.

It is found in the cell membrane. Branched-chain amino acid transport system that specifically transports branched-chain amino acids (BCAAs) (isoleucine, leucine and valine) and, to a lesser extent, methionine. Important for CodY-mediated regulation, and required for optimal growth in media containing free amino acids as the only amino acid source. The chain is Branched-chain amino acid permease BcaP from Lactococcus lactis subsp. cremoris (strain MG1363).